The primary structure comprises 633 residues: MGLCVNGAVPSEATKKDENLKRGNWGNQIEFVLTSVGYAVGLGNVWRFPYLCYRNGGGAFMFPYFIMLIFCGIPLFFMELSFGQFASQGCLGVWRVSPIFKGVGYGMMVVSTYIGIYYNVVICIAFYYFFASMNRVLPWTYCNNLWNTNNCAGVLSPNSSASFNLSSQQNLLNLTLGLNQTLKRTSPSEEYWRRHVLKISEDIGDFGEVQLPLLGCLGVSWLVVFLCLIRGVKSSGKVVYFTATFPYVVLTILFIRGITLEGAINGILYYLTPQWDKILHAMVWGDAASQIFYSLGCAWGGLITMASYNKFHNNCYRDSIIISITNCATSVYAGFVIFSILGFMATHLGVDVSEVADHGPGLAFVAYPEALTLLPISPLWSILFFFMLILLGLGTQFCLLETLVTAVVDEIGNDWIIRWKTLVTLGVAIIGFLLGIPLTTQAGIYWLLLMDNYAASFSLVIISCIMCIAVMYIYGHRKYFKDIEMMLGFPPPLFFQICWRFISPGIIFFILIFTVIQYRPIQYNDYLYPDWAITIGFLMALSSVICIPLYAIFKIWCSEGDTFLQRLKNAVKPSKDWGPALQEHRTGRYAQMSSTRSESNPEAQPLNPEKMKEDLSLTIQGSNGQAHTQDSKV.

Residues 1–30 (MGLCVNGAVPSEATKKDENLKRGNWGNQIE) lie on the Cytoplasmic side of the membrane. Transmembrane regions (helical) follow at residues 31–51 (FVLT…FPYL), 58–78 (GAFM…LFFM), and 113–133 (YIGI…FASM). At 134 to 208 (NRVLPWTYCN…ISEDIGDFGE (75 aa)) the chain is on the extracellular side. N-linked (GlcNAc...) asparagine glycans are attached at residues Asn158, Asn164, Asn173, and Asn179. Transmembrane regions (helical) follow at residues 209 to 229 (VQLP…LCLI), 238 to 258 (VVYF…IRGI), 283 to 303 (VWGD…GGLI), 330 to 350 (SVYA…HLGV), 373 to 393 (LLPI…LLGL), 429 to 449 (IIGF…WLLL), 453 to 473 (YAAS…VMYI), 493 to 513 (LFFQ…ILIF), and 533 to 553 (ITIG…YAIF). Topologically, residues 554–633 (KIWCSEGDTF…GQAHTQDSKV (80 aa)) are cytoplasmic. The interval 588-633 (RYAQMSSTRSESNPEAQPLNPEKMKEDLSLTIQGSNGQAHTQDSKV) is disordered. 2 stretches are compositionally biased toward polar residues: residues 591 to 602 (QMSSTRSESNPE) and 617 to 633 (LTIQ…DSKV).

This sequence belongs to the sodium:neurotransmitter symporter (SNF) (TC 2.A.22) family. SLC6A9 subfamily. As to expression, first expressed in early tailbud stage embryos in the midbrain and anterior spinal cord, and weakly in the hindbrain. By late tailbud stages, expression extends posteriorly in the spinal cord to appear in between somites. Expressed in the forebrain, retina, between the somites and in the blood islands by the swimming tadpole stages.

The protein resides in the cell membrane. The catalysed reaction is glycine(out) + chloride(out) + 2 Na(+)(out) = glycine(in) + chloride(in) + 2 Na(+)(in). Functionally, sodium- and chloride-dependent glycine transporter which is essential for regulating glycine concentrations at inhibitory glycinergic synapses. The protein is Sodium- and chloride-dependent glycine transporter 1 of Xenopus laevis (African clawed frog).